The following is a 305-amino-acid chain: Cytochrome c biogenesis protein CcsA (305 aa).

8 consecutive transmembrane segments (helical) span residues 13-33, 42-62, 70-90, 97-117, 135-155, 212-232, 242-262, and 276-296; these read IYFS…VYPV, KGII…WFYS, LYES…FIDI, WIGV…TLIL, WLIM…CGSL, YTIV…AVWA, WDPK…YIHI, and VASL…ILGI.

Belongs to the CcmF/CycK/Ccl1/NrfE/CcsA family. As to quaternary structure, may interact with Ccs1.

It localises to the plastid. Its subcellular location is the chloroplast thylakoid membrane. Required during biogenesis of c-type cytochromes (cytochrome c6 and cytochrome f) at the step of heme attachment. This chain is Cytochrome c biogenesis protein CcsA, found in Welwitschia mirabilis (Tree tumbo).